Reading from the N-terminus, the 618-residue chain is Probable protein disulfide-isomerase A4 (618 aa).

Positions 1–21 are cleaved as a signal peptide; it reads MMFDRRFFALVVLLCVSAVRS. 3 consecutive Thioredoxin domains span residues 22-139, 138-254, and 480-609; these read TEDA…SRVD, VDPN…DQSK, and SSGK…KHGV. Intrachain disulfides connect Cys65-Cys68, Cys176-Cys179, and Cys529-Cys532. Positions 615-618 match the Prevents secretion from ER motif; it reads KDEL.

This sequence belongs to the protein disulfide isomerase family.

The protein localises to the endoplasmic reticulum lumen. It carries out the reaction Catalyzes the rearrangement of -S-S- bonds in proteins.. This Caenorhabditis elegans protein is Probable protein disulfide-isomerase A4.